A 232-amino-acid chain; its full sequence is Ubiquitin carboxyl-terminal hydrolase UCHL3 (232 aa).

The 220-residue stretch at 6–225 folds into the UCH catalytic domain; it reads IWTPLESNPD…LRFSALAVIP (220 aa). The tract at residues 10–14 is interaction with ubiquitin; it reads LESNP. Catalysis depends on Cys-92, which acts as the Nucleophile. The crossover loop which restricts access of large ubiquitin adducts to the active site stretch occupies residues 151–159; the sequence is QVENRDDIL. The interval 163 to 165 is interaction with ubiquitin; the sequence is THF. His-164 acts as the Proton donor in catalysis.

It belongs to the peptidase C12 family.

The catalysed reaction is Thiol-dependent hydrolysis of ester, thioester, amide, peptide and isopeptide bonds formed by the C-terminal Gly of ubiquitin (a 76-residue protein attached to proteins as an intracellular targeting signal).. Functionally, thiol protease that recognizes and hydrolyzes a peptide bond at the C-terminal glycine of either ubiquitin or NEDD8. Essential for parasite blood stage survival. The chain is Ubiquitin carboxyl-terminal hydrolase UCHL3 from Plasmodium falciparum (isolate 3D7).